The sequence spans 440 residues: Thymidine phosphorylase (440 aa).

Belongs to the thymidine/pyrimidine-nucleoside phosphorylase family. In terms of assembly, homodimer.

The catalysed reaction is thymidine + phosphate = 2-deoxy-alpha-D-ribose 1-phosphate + thymine. It participates in pyrimidine metabolism; dTMP biosynthesis via salvage pathway; dTMP from thymine: step 1/2. The enzymes which catalyze the reversible phosphorolysis of pyrimidine nucleosides are involved in the degradation of these compounds and in their utilization as carbon and energy sources, or in the rescue of pyrimidine bases for nucleotide synthesis. This Rhizobium meliloti (strain 1021) (Ensifer meliloti) protein is Thymidine phosphorylase.